The sequence spans 209 residues: Molybdenum cofactor guanylyltransferase (209 aa).

GTP is bound by residues 13 to 15, K26, N54, D74, and D104; that span reads LAG. D104 serves as a coordination point for Mg(2+).

This sequence belongs to the MobA family. In terms of assembly, monomer. It depends on Mg(2+) as a cofactor.

The protein localises to the cytoplasm. It carries out the reaction Mo-molybdopterin + GTP + H(+) = Mo-molybdopterin guanine dinucleotide + diphosphate. Its function is as follows. Transfers a GMP moiety from GTP to Mo-molybdopterin (Mo-MPT) cofactor (Moco or molybdenum cofactor) to form Mo-molybdopterin guanine dinucleotide (Mo-MGD) cofactor. The polypeptide is Molybdenum cofactor guanylyltransferase (Acinetobacter baumannii (strain ACICU)).